The sequence spans 143 residues: Ribosome-binding factor A (143 aa).

The segment at 117–143 (DAEIARRSQGAMPAGEADPYRHSDEEE) is disordered. The segment covering 134–143 (DPYRHSDEEE) has biased composition (basic and acidic residues).

The protein belongs to the RbfA family. Monomer. Binds 30S ribosomal subunits, but not 50S ribosomal subunits or 70S ribosomes.

Its subcellular location is the cytoplasm. One of several proteins that assist in the late maturation steps of the functional core of the 30S ribosomal subunit. Associates with free 30S ribosomal subunits (but not with 30S subunits that are part of 70S ribosomes or polysomes). Required for efficient processing of 16S rRNA. May interact with the 5'-terminal helix region of 16S rRNA. This Cutibacterium acnes (strain DSM 16379 / KPA171202) (Propionibacterium acnes) protein is Ribosome-binding factor A.